Here is a 251-residue protein sequence, read N- to C-terminus: 2,3-bisphosphoglycerate-dependent phosphoglycerate mutase (251 aa).

Substrate is bound by residues 8–15 (RHGESLWN), 21–22 (TG), arginine 60, 87–90 (ERHY), lysine 98, 114–115 (RR), and 183–184 (GN). Histidine 9 serves as the catalytic Tele-phosphohistidine intermediate. Glutamate 87 acts as the Proton donor/acceptor in catalysis.

It belongs to the phosphoglycerate mutase family. BPG-dependent PGAM subfamily.

The catalysed reaction is (2R)-2-phosphoglycerate = (2R)-3-phosphoglycerate. The protein operates within carbohydrate degradation; glycolysis; pyruvate from D-glyceraldehyde 3-phosphate: step 3/5. Its function is as follows. Catalyzes the interconversion of 2-phosphoglycerate and 3-phosphoglycerate. The sequence is that of 2,3-bisphosphoglycerate-dependent phosphoglycerate mutase from Thermoanaerobacter pseudethanolicus (strain ATCC 33223 / 39E) (Clostridium thermohydrosulfuricum).